The chain runs to 664 residues: MNRARKTSSCGCFRSAFCLLKPSTSSASEEHGDSDKKLLSVQLITPRDEEEQTSSRSIKIPPLDLNGLDCKKNAVAARRAGRRRTSEGGGVRGKGHFAEVVLDGLQRPVSLLRNQKEKSNSDDNCQEKEPTSPSSSRKKSYDNAPALESLEKLRYILHQLNSGQLPLEDLKRNIEYAALVLETAYMDETRRICDEDDDLAEVTPETVPDEVREWLAATFTRQNAGKKRDKPKFKSVANAIRTGIFFEKLFRKQQVVQCPIPPEIAELMKEVCTWSFSPFQLNEVSEGHALKYVGFELFNRYGFMDRFKVPLTALENYLSALEVGYSKHNNPYHNVVHAADVTQSSHFMLSQTGLANSLGDLELLAVLFGALIHDYEHTGHTNNFHIQSQSQFAMLYNDRSVLENHHVSSCFRLMKEDDKNILTHLTRDEYKELRNMVIEIVLATDMSTHFMQIKTMKSMLSLPEGIDKNKALCLIVHACDISHPAKPWNLHERWTEGVLEEFFRQGDLEASMGLPYSPLCDRHTVHVADSQIGFIDFIVEPTMVVCGELLVKMVEPLVSLPPTDSLFPPSVDGGDDKSPSNALSPLPDLRNSSTSPSSIRRIPLNYAGKLDIPTPWMKFLHENKAHWKERAAKEEEERKIKEAAEAEAAAKQVEENKENGVTTN.

Disordered stretches follow at residues 24–60 (TSSA…SIKI) and 113–142 (RNQK…KSYD). Composition is skewed to basic and acidic residues over residues 28–38 (SEEHGDSDKKL) and 114–130 (NQKE…EKEP). One can recognise a PDEase domain in the interval 256 to 634 (VQCPIPPEIA…AHWKERAAKE (379 aa)). The active-site Proton donor is the His333. Residues His337, His373, Asp374, and Asp480 each coordinate a divalent metal cation. 2 disordered regions span residues 564–597 (DSLF…TSPS) and 630–664 (RAAK…VTTN). Positions 630–644 (RAAKEEEERKIKEAA) are enriched in basic and acidic residues.

This sequence belongs to the cyclic nucleotide phosphodiesterase family. Interacts with cmd-1 in the presence of Ca(2+). A divalent metal cation is required as a cofactor. As to expression, expressed in AFD thermosensory neurons.

It catalyses the reaction a nucleoside 3',5'-cyclic phosphate + H2O = a nucleoside 5'-phosphate + H(+). Its function is as follows. Redundantly with pde-5, plays a role in the AFD thermosensory neurons to regulate microvilli receptive ending morphology, possibly by regulating cGMP levels. The sequence is that of Probable 3',5'-cyclic phosphodiesterase pde-1 (pde-1) from Caenorhabditis elegans.